The sequence spans 131 residues: Large ribosomal subunit protein bL19 (131 aa).

It belongs to the bacterial ribosomal protein bL19 family.

This protein is located at the 30S-50S ribosomal subunit interface and may play a role in the structure and function of the aminoacyl-tRNA binding site. The protein is Large ribosomal subunit protein bL19 of Synechococcus sp. (strain CC9902).